The primary structure comprises 344 residues: GTP 3',8-cyclase (344 aa).

The 227-residue stretch at 19–245 folds into the Radical SAM core domain; sequence PFGRAVTYLR…DIPYRTGGPA (227 aa). Position 28 (arginine 28) interacts with GTP. Residues cysteine 35 and cysteine 39 each coordinate [4Fe-4S] cluster. S-adenosyl-L-methionine is bound at residue tyrosine 41. Cysteine 42 is a binding site for [4Fe-4S] cluster. Arginine 77 contacts GTP. Glycine 81 lines the S-adenosyl-L-methionine pocket. Threonine 111 lines the GTP pocket. Serine 135 contacts S-adenosyl-L-methionine. Lysine 171 is a GTP binding site. Methionine 205 contributes to the S-adenosyl-L-methionine binding site. [4Fe-4S] cluster is bound by residues cysteine 268 and cysteine 271. 273–275 contributes to the GTP binding site; sequence RVR. Cysteine 285 is a binding site for [4Fe-4S] cluster.

Belongs to the radical SAM superfamily. MoaA family. As to quaternary structure, monomer and homodimer. Requires [4Fe-4S] cluster as cofactor.

It carries out the reaction GTP + AH2 + S-adenosyl-L-methionine = (8S)-3',8-cyclo-7,8-dihydroguanosine 5'-triphosphate + 5'-deoxyadenosine + L-methionine + A + H(+). The protein operates within cofactor biosynthesis; molybdopterin biosynthesis. In terms of biological role, catalyzes the cyclization of GTP to (8S)-3',8-cyclo-7,8-dihydroguanosine 5'-triphosphate. The sequence is that of GTP 3',8-cyclase from Brucella canis (strain ATCC 23365 / NCTC 10854 / RM-666).